Here is a 463-residue protein sequence, read N- to C-terminus: MHKFFPRSGFFDFETVRILGTACYGGADVAEVLEAVGEIKSDDAASWEEAWRRQSWWAEALADQAREGGDREAARRAYLRASNYARASGYMYVSDLGAEGGNAPPTQDPRALPVAEKVGRLFRKALALMEGEVRALSIPCGAQALPGLLYLPPPGKRIPGRDKIPVLVFLGGADSCQEELYYLYPAAGPGLGYAVLTFDGPGQGIVLRKHGLRVRPDWEVVTSSVLDYLEAYSAQHPGLELDMKAIAVSGASMGGYYALRSAVDRRVKACVSIDPFYDMWDFGTAHVSPLFISAWTSGIISSGFVDKLMTVVSRLWFQMKWEIALTGTLFGLSSPSQILLNMKNYTLSGKSDGSRANGKKSHSPTDGGGVESDSFLSEVRCPVFLSGAGKSLYLDVDSHTRRCYDGLTGVAAKDKELWVPESEGQGSLQAKMGALALCNQKTFQFLDKVLGVQRVPLDVSAHI.

Catalysis depends on S252, which acts as the Nucleophile. Residues 350 to 373 (KSDGSRANGKKSHSPTDGGGVESD) form a disordered region.

Belongs to the AB hydrolase superfamily. FUS2 hydrolase family. Homodimer.

The protein operates within mycotoxin biosynthesis. Functionally, hydrolyase; part of the gene cluster that mediates the biosynthesis of the mycotoxin pyrichalasin H, a tyrosine-derived cytochalasan that inhibits the growth of rice seedlings, but also inhibits lymphocyte capping and actin polymerization and alters cell morphology. Pyrichalasin H is indicated as the responsible agent for the genus-specific pathogenicity of M.grisea toward crabgrass. The first step in the pathway is catalyzed by the O-methyltransferase pyiA which methylates free tyrosine to generate the precursor O-methyltyrosine. The hybrid PKS-NRPS pyiS, assisted by the enoyl reductase pyiC, are responsible for fusion of the O-methyltyrosine precursor and the polyketide backbone. The polyketide synthase module (PKS) of pyiS is responsible for the synthesis of the polyketide backbone and the downstream nonribosomal peptide synthetase (NRPS) amidates the carboxyl end of the polyketide with the O-methyltyrosine precursor. As the NRPS A-domain demonstrates substrate tolerance, pyiS can also use phenylalanine, tyrosine and even para-chlorophenylalanine as amino acid precursor, which leads to the production of novel cytochalasans, including halogenated cytochalasans. Because pyiS lacks a designated enoylreductase (ER) domain, the required activity is provided the enoyl reductase pyiC. Reduction by the hydrolyase pyiE leads to 1,5-dihydropyrrolone, which is substrate for dehydration and intra-molecular Diels-Alder cyclization by the Diels-Alderase pyiF to yield the required isoindolone-fused macrocycle. The tailoring cytochrome P450 monooxygenases piyD and piyG catalyze the hydroxylation at C-18 and C-7, respectivily, whereas the short-chain dehydrogenase/reductase pyiH reduces the carbonyl at C-21 in preparation for the transfer of an acetyl group by the acetyltransferase pyiB. These 3 reactions whose order is not clear yet, lead to the production of O-methylpyrichalasin J, a deacetylated pyrichalasin H. Finally, pyiB to converts O-methylpyrichalasin J into the final product pyrichalasin H via acetylation of C-21. The polypeptide is Hydrolase pyiE (Pyricularia grisea (Crabgrass-specific blast fungus)).